A 346-amino-acid polypeptide reads, in one-letter code: Biotin synthase (346 aa).

One can recognise a Radical SAM core domain in the interval 38 to 256 (RQVQVSTLLS…IAVARIMMPT (219 aa)). [4Fe-4S] cluster is bound by residues cysteine 53, cysteine 57, and cysteine 60. Residues cysteine 97, cysteine 128, cysteine 188, and arginine 260 each contribute to the [2Fe-2S] cluster site.

The protein belongs to the radical SAM superfamily. Biotin synthase family. As to quaternary structure, homodimer. The cofactor is [4Fe-4S] cluster. It depends on [2Fe-2S] cluster as a cofactor.

The enzyme catalyses (4R,5S)-dethiobiotin + (sulfur carrier)-SH + 2 reduced [2Fe-2S]-[ferredoxin] + 2 S-adenosyl-L-methionine = (sulfur carrier)-H + biotin + 2 5'-deoxyadenosine + 2 L-methionine + 2 oxidized [2Fe-2S]-[ferredoxin]. The protein operates within cofactor biosynthesis; biotin biosynthesis; biotin from 7,8-diaminononanoate: step 2/2. Functionally, catalyzes the conversion of dethiobiotin (DTB) to biotin by the insertion of a sulfur atom into dethiobiotin via a radical-based mechanism. The protein is Biotin synthase of Escherichia coli O6:H1 (strain CFT073 / ATCC 700928 / UPEC).